Reading from the N-terminus, the 463-residue chain is MTTVQLQKTNQPPVKAPRGSYWITTFGCQMNKADSERMSGILEYMGYYPAEEELKADLVLYNTCTIRDSAEQKVYSYLGRQAIRKRSLPNLKIVVAGCLAQQEGESLLRRVPEIDLLMGPQHCNRLESLLNQVDSGQQVLATEEQFILEDITTPRRDSSFCGWVNIIYGCNERCTYCVVPSVRGKEQSRTPEAIKSEVEDLAKSGYKEITLLGQNIDAYGRDFQSQNKEASAQITLSYLLKYIHDIEGIERIRFATSHPRYFTKELIDTCSELPKVCEHFHIPFQSGSNKILKNMGRGYTIESYKNIINYIKSKIPKAAISGDAIVAFPGESETDYEQTLSLIDEIKFDHVNTAAYSPRPNTPAATWPRQLNEDIKVKRLREINSLVENIAKERNQRYKNTSQEILIENINPKDSFQLMGRTRTNRLTFFPRSLENGVENKLGELIKVKITDVRPFSLTAKLL.

Residues G19–S135 enclose the MTTase N-terminal domain. C28, C64, C98, C170, C174, and C177 together coordinate [4Fe-4S] cluster. The Radical SAM core domain maps to R156 to E393. The 68-residue stretch at Q396 to L463 folds into the TRAM domain.

This sequence belongs to the methylthiotransferase family. MiaB subfamily. Monomer. The cofactor is [4Fe-4S] cluster.

It localises to the cytoplasm. It catalyses the reaction N(6)-dimethylallyladenosine(37) in tRNA + (sulfur carrier)-SH + AH2 + 2 S-adenosyl-L-methionine = 2-methylsulfanyl-N(6)-dimethylallyladenosine(37) in tRNA + (sulfur carrier)-H + 5'-deoxyadenosine + L-methionine + A + S-adenosyl-L-homocysteine + 2 H(+). Its function is as follows. Catalyzes the methylthiolation of N6-(dimethylallyl)adenosine (i(6)A), leading to the formation of 2-methylthio-N6-(dimethylallyl)adenosine (ms(2)i(6)A) at position 37 in tRNAs that read codons beginning with uridine. The sequence is that of tRNA-2-methylthio-N(6)-dimethylallyladenosine synthase from Prochlorococcus marinus (strain NATL1A).